The following is a 134-amino-acid chain: Small ribosomal subunit protein uS11 (134 aa).

The disordered stretch occupies residues 114-134 (TPVPHNGTRPPRKWFKRQEKR). Residues 123–134 (PPRKWFKRQEKR) are compositionally biased toward basic residues.

It belongs to the universal ribosomal protein uS11 family. As to quaternary structure, part of the 30S ribosomal subunit. Interacts with proteins S7 and S18. Binds to IF-3.

Its function is as follows. Located on the platform of the 30S subunit, it bridges several disparate RNA helices of the 16S rRNA. Forms part of the Shine-Dalgarno cleft in the 70S ribosome. This chain is Small ribosomal subunit protein uS11, found in Mesomycoplasma hyopneumoniae (strain J / ATCC 25934 / NCTC 10110) (Mycoplasma hyopneumoniae).